A 135-amino-acid polypeptide reads, in one-letter code: Ribosome-binding factor A (135 aa).

This sequence belongs to the RbfA family. Monomer. Binds 30S ribosomal subunits, but not 50S ribosomal subunits or 70S ribosomes.

It is found in the cytoplasm. In terms of biological role, one of several proteins that assist in the late maturation steps of the functional core of the 30S ribosomal subunit. Associates with free 30S ribosomal subunits (but not with 30S subunits that are part of 70S ribosomes or polysomes). Required for efficient processing of 16S rRNA. May interact with the 5'-terminal helix region of 16S rRNA. This Bartonella tribocorum (strain CIP 105476 / IBS 506) protein is Ribosome-binding factor A.